The following is a 428-amino-acid chain: Acetyltransferase sirH (428 aa).

Asparagine 8 carries N-linked (GlcNAc...) asparagine glycosylation. 6 consecutive transmembrane segments (helical) span residues 33–53 (LLTP…PGPL), 55–75 (VIVG…HWVS), 78–98 (AFFM…LMFV), 305–325 (LYVG…LIPS), 329–349 (GWGM…EDIL), and 366–386 (FLGY…PVGF).

Belongs to the wax synthase family.

It is found in the membrane. The protein operates within polyketide biosynthesis. Its function is as follows. Acetyltransferase; part of the gene cluster that mediates the biosynthesis of asperlin, a polyketide showing anti-inflammatory, antitumor and antibiotic activities. The first step of the asperlin biosynthesis is the production of the intermediate 2,4,6-octatrienoic acid by the highly redusing polyketide synthase alnA with cleavage of the PKS product by the esterase alnB. 2,4,6-octatrienoic acid is further converted to asperlin via several steps involving the remaining enzymes from the cluster. The polypeptide is Acetyltransferase sirH (Emericella nidulans (strain FGSC A4 / ATCC 38163 / CBS 112.46 / NRRL 194 / M139) (Aspergillus nidulans)).